A 499-amino-acid chain; its full sequence is Potassium voltage-gated channel subfamily A member 2 (499 aa).

The interval 1–26 (MTVATEDPADEAAALPGHPQDTYDPE) is disordered. A tetramerization domain region spans residues 1–125 (MTVATEDPAD…YELGEEAMEM (125 aa)). The Cytoplasmic portion of the chain corresponds to 1–160 (MTVATEDPAD…LLFEYPESSG (160 aa)). Residues 161–182 (PARIIAIVSVMVILISIVSFCL) form a helical membrane-spanning segment. Residues 183-221 (ETLPIFRDENEDMHGSGMTFHTYSNSTAGYQQSTSFTDP) lie on the Extracellular side of the membrane. The N-linked (GlcNAc...) asparagine glycan is linked to Asn207. Residues 222-243 (FFIVETLCIIWFSFEFLVRFFA) traverse the membrane as a helical segment. Cys244 carries S-palmitoyl cysteine lipidation. The Cytoplasmic portion of the chain corresponds to 244 to 254 (CPSKAGFFTNI). A helical membrane pass occupies residues 255–275 (MNIIDIVAIIPYFITLGTELA). The Extracellular segment spans residues 276–289 (EKPEDAQQGQQAMS). A helical; Voltage-sensor membrane pass occupies residues 290–310 (LAILRVIRLVRVFRIFKLSRH). The Cytoplasmic portion of the chain corresponds to 311–325 (SKGLQILGQTLKASM). The segment at 312-325 (KGLQILGQTLKASM) is S4-S5 linker. A helical transmembrane segment spans residues 326 to 347 (RELGLLIFFLFIGVILFSSAVY). The Extracellular portion of the chain corresponds to 348-361 (FAEADERDSQFPSI). The segment at residues 362–373 (PDAFWWAVVSMT) is an intramembrane region (helical). A Selectivity filter motif is present at residues 374–379 (TVGYGD). The stretch at 374–381 (TVGYGDMV) is an intramembrane region. Topologically, residues 382–388 (PTTIGGK) are extracellular. A helical membrane pass occupies residues 389–417 (IVGSLCAIAGVLTIALPVPVIVSNFNYFY). Residues 418–499 (HRETEGEEQA…VNITKMLTDV (82 aa)) are Cytoplasmic-facing. Position 429 is a phosphotyrosine (Tyr429). A phosphoserine mark is found at Ser434, Ser440, Ser441, and Ser449. Tyr458 carries the phosphotyrosine modification. Ser468 bears the Phosphoserine mark. The short motif at 497 to 499 (TDV) is the PDZ-binding element.

It belongs to the potassium channel family. A (Shaker) (TC 1.A.1.2) subfamily. Kv1.2/KCNA2 sub-subfamily. Homotetramer and heterotetramer with other channel-forming alpha subunits, such as KCNA1, KCNA4, KCNA5, KCNA6 and KCNA7. Channel activity is regulated by interaction with the beta subunits, including KCNAB1 and KCNAB2. Identified in a complex with KCNA1 and KCNAB2. Identified in a complex with KCNA4 and FYN. Identified in a complex with KCNA5 and KCNAB1. Interacts with the beta subunit KCNAB1. Interacts with PTK2B. Interacts (via C-terminus) with CTTN. Interacts (via N-terminal cytoplasmic domain) with RHOA (GTP-bound form); this regulates channel activity by reducing location at the cell surface in response to CHRM1 activation. Interacts with DRD2. Interacts with SIGMAR1; cocaine consumption leads to increased interaction. Interacts with ADAM22. Interacts with CNTNAP2. Interacts (via C-terminus) with the PDZ domains of DLG1, DLG2 and DLG4. Interacts with ADAM11. Interacts with LYNX1. In terms of processing, phosphorylated on tyrosine residues; phosphorylation increases in response to ischemia. Phosphorylated on tyrosine residues by activated PTK2B/PYK2. Phosphorylation on tyrosine residues suppresses ion channel activity. Phosphorylated on tyrosine residues in response to CHRM1 activation; this abolishes interaction with CTTN. This is probably due to endocytosis of the phosphorylated channel subunits. Phosphorylated on serine residues in response to increased cAMP levels; phosphorylation is apparently not catalyzed by PKA. Post-translationally, N-glycosylated, with complex, sialylated N-glycans. In terms of tissue distribution, detected in portal vein myocytes (at protein level). Detected in portal vein. Brain, liver and kidney.

The protein localises to the cell membrane. It is found in the membrane. It localises to the cell projection. The protein resides in the axon. Its subcellular location is the synapse. The protein localises to the presynaptic cell membrane. It is found in the synaptosome. It localises to the endoplasmic reticulum membrane. The protein resides in the dendrite. Its subcellular location is the lamellipodium membrane. The protein localises to the cell junction. It is found in the paranodal septate junction. The catalysed reaction is K(+)(in) = K(+)(out). With respect to regulation, inhibited by 4-aminopyridine (4-AP). Inhibited by dendrotoxin (DTX) and charybdotoxin (CTX), but not by tetraethylammonium (TEA). Inhibited by tityustoxin-K alpha (TsTX-Kalpha), a toxin that is highly specific for KCNA2. Inhibited by maurotoxin. Inhibited by kappaM conotoxins kappaM-RIIIJ and kappaM-RIIIK. Its function is as follows. Voltage-gated potassium channel that mediates transmembrane potassium transport in excitable membranes, primarily in the brain and the central nervous system, but also in the cardiovascular system. Prevents aberrant action potential firing and regulates neuronal output. Forms tetrameric potassium-selective channels through which potassium ions pass in accordance with their electrochemical gradient. The channel alternates between opened and closed conformations in response to the voltage difference across the membrane. Can form functional homotetrameric channels and heterotetrameric channels that contain variable proportions of KCNA1, KCNA2, KCNA4, KCNA5, KCNA6, KCNA7, and possibly other family members as well; channel properties depend on the type of alpha subunits that are part of the channel. Channel properties are modulated by cytoplasmic beta subunits that regulate the subcellular location of the alpha subunits and promote rapid inactivation of delayed rectifier potassium channels. In vivo, membranes probably contain a mixture of heteromeric potassium channel complexes, making it difficult to assign currents observed in intact tissues to any particular potassium channel family member. Homotetrameric KCNA2 forms a delayed-rectifier potassium channel that opens in response to membrane depolarization, followed by slow spontaneous channel closure. In contrast, a heteromultimer formed by KCNA2 and KCNA4 shows rapid inactivation. Regulates neuronal excitability and plays a role as pacemaker in the regulation of neuronal action potentials. KCNA2-containing channels play a presynaptic role and prevent hyperexcitability and aberrant action potential firing. Response to toxins that are selective for KCNA2-containing potassium channels suggests that in Purkinje cells, dendritic subthreshold KCNA2-containing potassium channels prevent random spontaneous calcium spikes, suppressing dendritic hyperexcitability without hindering the generation of somatic action potentials, and thereby play an important role in motor coordination. Plays a role in the induction of long-term potentiation of neuron excitability in the CA3 layer of the hippocampus. May function as down-stream effector for G protein-coupled receptors and inhibit GABAergic inputs to basolateral amygdala neurons. May contribute to the regulation of neurotransmitter release, such as gamma-aminobutyric acid (GABA). Contributes to the regulation of the axonal release of the neurotransmitter dopamine. Reduced KCNA2 expression plays a role in the perception of neuropathic pain after peripheral nerve injury, but not acute pain. Plays a role in the regulation of the time spent in non-rapid eye movement (NREM) sleep. In Oryctolagus cuniculus (Rabbit), this protein is Potassium voltage-gated channel subfamily A member 2 (KCNA2).